Reading from the N-terminus, the 607-residue chain is Cyclic-di-GMP receptor FimW (607 aa).

The pilZ-like domain stretch occupies residues Glu-323–Ile-492. Positions Arg-324–Arg-328 match the RXXXR motif motif. The D/NXSXXG motif motif lies at Asn-435 to Gly-440. Over residues Ser-568–Ser-582 the composition is skewed to polar residues. Residues Ser-568–Leu-607 are disordered.

As to quaternary structure, monomer in the absence of c-di-GMP. Forms dimers in the presence of c-di-GMP.

Its subcellular location is the cytoplasm. Its function is as follows. High-affinity cyclic-di-GMP binding protein that regulates type IV pili (T4P) elongation. Required for T4P-mediated surface attachment and walking motility during the early phases of surface colonization. Not required for twitching motility. Does not bind related nucleotides such as GMP, GDP, GTP or ATP. The protein is Cyclic-di-GMP receptor FimW of Pseudomonas aeruginosa (strain ATCC 15692 / DSM 22644 / CIP 104116 / JCM 14847 / LMG 12228 / 1C / PRS 101 / PAO1).